We begin with the raw amino-acid sequence, 418 residues long: Mitochondrial outer membrane protein SLC25A46 (418 aa).

A phosphoserine mark is found at Ser32 and Ser35. At Thr45 the chain carries Phosphothreonine. The interval 46–96 (PPDIPGSRNLHWGEKSPSYGVPSAPPTLEGPAEEPFPGGGDGPRPGRSSEQ) is disordered. The Solcar 1 repeat unit spans residues 96-187 (QLNRFAGFGI…GIISEFTPLP (92 aa)). 6 consecutive transmembrane segments (helical) span residues 103-123 (FGIG…CIVL), 167-187 (FIVQ…TPLP), 202-222 (HLLL…ASLI), 258-278 (LLPL…HYII), 314-334 (FPEL…LYPL), and 382-402 (VFGF…HATI). A Solcar 2 repeat occupies 311–416 (DAYFPELIAN…KIIYSTLLQN (106 aa)).

The protein belongs to the mitochondrial carrier (TC 2.A.29) family. As to quaternary structure, associates with the mitochondrial contact site and cristae organizing system (MICOS) complex. May associate with the endoplasmic reticulum membrane protein complex (EMC). Widely expressed. Highly expressed in hindbrain, spinal cord and brain coronal sections containing corpus callosum, fornix, optic chiasm, thalamus, hypothalamus, midbrain, pons and cerebellum.

Its subcellular location is the mitochondrion outer membrane. Transmembrane protein of the mitochondrial outer membrane that controls mitochondrial organization. May regulate the assembly of the MICOS (mitochondrial contact site and cristae organizing system) complex which is essential to the biogenesis and dynamics of mitochondrial cristae, the inwards folds of the inner mitochondrial membrane. Through its interaction with the EMC (endoplasmic reticulum membrane protein complex), could regulate mitochondrial lipid homeostasis and thereby mitochondrial fission. The polypeptide is Mitochondrial outer membrane protein SLC25A46 (Rattus norvegicus (Rat)).